The chain runs to 687 residues: Transcription activator of gluconeogenesis SNOG_12336 (687 aa).

Positions 1–56 (MASPDAEDASPSPEYRSDLDDDMAAEQKTDDGSPSQKSSNGQKPASNAKDPLRPRR) are disordered. Residues 32–45 (GSPSQKSSNGQKPA) are compositionally biased toward polar residues. Positions 63-91 (CFACQRAHLTCGDERPCTRCIKRGLQDHC) form a DNA-binding region, zn(2)-C6 fungal-type. 2 stretches are compositionally biased toward polar residues: residues 150–159 (PSGTFYQPPS) and 169–179 (HGRSFSDQQSP). Disordered regions lie at residues 150-214 (PSGT…GPLF), 300-411 (ESQS…KRHR), and 536-561 (GNSREADESEMSTQTNTTPNLTGQEA). The span at 195-212 (PPSSISQGQPGQMQQFGP) shows a compositional bias: low complexity. Residues 300-318 (ESQSRQNSMHIHTPTSSAT) show a composition bias toward polar residues. Over residues 342 to 357 (PSSHSTASPASTDASA) the composition is skewed to low complexity. Composition is skewed to polar residues over residues 362 to 384 (NPLSTATFFANTNRGQPQRSPTT), 392 to 402 (RPPSTALQPIH), and 546 to 561 (MSTQTNTTPNLTGQEA). In terms of domain architecture, PAS spans 482-553 (NLMTLQDHFT…SEMSTQTNTT (72 aa)).

Belongs to the ERT1/acuK family.

It localises to the nucleus. In terms of biological role, transcription factor which regulates nonfermentable carbon utilization. Activator of gluconeogenetic genes. The chain is Transcription activator of gluconeogenesis SNOG_12336 from Phaeosphaeria nodorum (strain SN15 / ATCC MYA-4574 / FGSC 10173) (Glume blotch fungus).